Reading from the N-terminus, the 198-residue chain is MPKIGMEPLRRRELIDAAIRTIGQRGSLDVTVAQIAHEAGVSPALAHHYFGGKDKLILATMRHLLRELGRDLNVAIKQANTPHERIAAIIAVNFSATQFAQETIAAWLTFYVHAQQSDDIKRLLRIYARRLHSNLVFALEQLTSRARANRIAEGAGAMIDGLYIRHALGADAPDAASAIALVEDYIAIQLSGQPSAEN.

The region spanning 8–68 (PLRRRELIDA…ATMRHLLREL (61 aa)) is the HTH tetR-type domain. The segment at residues 31–50 (TVAQIAHEAGVSPALAHHYF) is a DNA-binding region (H-T-H motif).

The protein operates within amine and polyamine biosynthesis; betaine biosynthesis via choline pathway [regulation]. Functionally, repressor involved in the biosynthesis of the osmoprotectant glycine betaine. It represses transcription of the choline transporter BetT and the genes of BetAB involved in the synthesis of glycine betaine. This is HTH-type transcriptional regulator BetI from Brucella abortus (strain 2308).